The following is a 295-amino-acid chain: Protoheme IX farnesyltransferase (295 aa).

The next 9 membrane-spanning stretches (helical) occupy residues 9 to 29, 36 to 56, 80 to 100, 108 to 128, 135 to 155, 163 to 183, 209 to 229, 230 to 250, and 265 to 285; these read ITKPGIIFGNVLSVAGGFFLA, FGVFLAAVIGTSLVVASGCVF, LVSLKLALLYATLLGIAGVAL, LAALFAVIGFVIYVGFYSLYL, GTLVGSLSGAMPPVIGYCAVS, LTLLVMFSLWQMPHSYAIAIF, ILLYILAFLVATLMLTVGGYA, GLNYLAVAAGMGMYWLYMAWK, and FVFSIFTITALSVMMSVDFQV.

The protein belongs to the UbiA prenyltransferase family. Protoheme IX farnesyltransferase subfamily.

It is found in the cell inner membrane. It carries out the reaction heme b + (2E,6E)-farnesyl diphosphate + H2O = Fe(II)-heme o + diphosphate. It participates in porphyrin-containing compound metabolism; heme O biosynthesis; heme O from protoheme: step 1/1. Converts heme B (protoheme IX) to heme O by substitution of the vinyl group on carbon 2 of heme B porphyrin ring with a hydroxyethyl farnesyl side group. The polypeptide is Protoheme IX farnesyltransferase (Pseudomonas syringae pv. tomato (strain ATCC BAA-871 / DC3000)).